The primary structure comprises 43 residues: uncharacterized protein (43 aa).

Positions 1–16 are cleaved as a signal peptide; it reads MKLLNFILIIFNALKS. Asparagine 37 carries an N-linked (GlcNAc...) asparagine; by host glycan.

This is an uncharacterized protein from Acheta domesticus (House cricket).